Here is a 120-residue protein sequence, read N- to C-terminus: Flagellar protein FliT (120 aa).

The tract at residues methionine 1–threonine 50 is required for homodimerization. A fliD binding region spans residues isoleucine 59–lysine 97.

The protein belongs to the FliT family. Homodimer. Interacts with FliD and FlhC.

Its subcellular location is the cytoplasm. It is found in the cytosol. In terms of biological role, dual-function protein that regulates the transcription of class 2 flagellar operons and that also acts as an export chaperone for the filament-capping protein FliD. As a transcriptional regulator, acts as an anti-FlhDC factor; it directly binds FlhC, thus inhibiting the binding of the FlhC/FlhD complex to class 2 promoters, resulting in decreased expression of class 2 flagellar operons. As a chaperone, effects FliD transition to the membrane by preventing its premature polymerization, and by directing it to the export apparatus. The sequence is that of Flagellar protein FliT from Enterobacter sp. (strain 638).